We begin with the raw amino-acid sequence, 181 residues long: Inner membrane-spanning protein YciB (181 aa).

5 helical membrane passes run 10 to 30 (LIIF…GALI), 50 to 70 (MHLI…VFHD), 72 to 92 (AFIK…LGVS), 118 to 138 (VTWY…YVAF), and 148 to 168 (FKVF…VFYL).

This sequence belongs to the YciB family.

It localises to the cell inner membrane. Plays a role in cell envelope biogenesis, maintenance of cell envelope integrity and membrane homeostasis. In Shewanella sp. (strain MR-7), this protein is Inner membrane-spanning protein YciB.